We begin with the raw amino-acid sequence, 340 residues long: DNA-directed RNA polymerase subunit alpha (340 aa).

The alpha N-terminal domain (alpha-NTD) stretch occupies residues Met-1–Asn-226. Positions Leu-243–Tyr-340 are alpha C-terminal domain (alpha-CTD).

It belongs to the RNA polymerase alpha chain family. In terms of assembly, homodimer. The RNAP catalytic core consists of 2 alpha, 1 beta, 1 beta' and 1 omega subunit. When a sigma factor is associated with the core the holoenzyme is formed, which can initiate transcription.

The enzyme catalyses RNA(n) + a ribonucleoside 5'-triphosphate = RNA(n+1) + diphosphate. DNA-dependent RNA polymerase catalyzes the transcription of DNA into RNA using the four ribonucleoside triphosphates as substrates. The protein is DNA-directed RNA polymerase subunit alpha of Streptomyces avermitilis (strain ATCC 31267 / DSM 46492 / JCM 5070 / NBRC 14893 / NCIMB 12804 / NRRL 8165 / MA-4680).